Reading from the N-terminus, the 61-residue chain is U-scoloptoxin(14)-Sm1a (61 aa).

The N-terminal stretch at 1–24 (MNPKLCMLLLVCLMAFYVIETVQA) is a signal peptide.

The protein belongs to the scoloptoxin-14 family. Contains 4 disulfide bonds. As to expression, expressed by the venom gland.

The protein resides in the secreted. This chain is U-scoloptoxin(14)-Sm1a, found in Scolopendra morsitans (Tanzanian blue ringleg centipede).